Reading from the N-terminus, the 230-residue chain is Cytochrome b6-f complex iron-sulfur subunit, chloroplastic (230 aa).

Over residues 1 to 16 (MASTTLSATPTPSQLS) the composition is skewed to low complexity. Residues 1–20 (MASTTLSATPTPSQLSAAKN) form a disordered region. Residues 1-56 (MASTTLSATPTPSQLSAAKNGAYSPSRALLGKTARGLYPEKEMVSRKVTCQATSIP) constitute a chloroplast transit peptide. A helical membrane pass occupies residues 73-93 (LLGALSLPTAGMLIPYGAFFV). The 97-residue stretch at 116–212 (AAAWLKTHGP…CDISEEGKVV (97 aa)) folds into the Rieske domain. Residues cysteine 158, histidine 160, cysteine 176, and histidine 179 each coordinate [2Fe-2S] cluster. A disulfide bridge links cysteine 163 with cysteine 178.

The protein belongs to the Rieske iron-sulfur protein family. As to quaternary structure, the 4 large subunits of the cytochrome b6-f complex are cytochrome b6, subunit IV (17 kDa polypeptide, petD), cytochrome f and the Rieske protein, while the 4 small subunits are petG, petL, petM and petN. The complex functions as a dimer. The cofactor is [2Fe-2S] cluster.

Its subcellular location is the plastid. It is found in the chloroplast thylakoid membrane. The enzyme catalyses 2 oxidized [plastocyanin] + a plastoquinol + 2 H(+)(in) = 2 reduced [plastocyanin] + a plastoquinone + 4 H(+)(out). Component of the cytochrome b6-f complex, which mediates electron transfer between photosystem II (PSII) and photosystem I (PSI), cyclic electron flow around PSI, and state transitions. The polypeptide is Cytochrome b6-f complex iron-sulfur subunit, chloroplastic (petC) (Fritillaria agrestis (Stinkbells)).